A 517-amino-acid chain; its full sequence is GMP synthase [glutamine-hydrolyzing] (517 aa).

The Glutamine amidotransferase type-1 domain maps to 9-199; the sequence is RILILDFGSQ…VLNVCGCEGL (191 aa). The active-site Nucleophile is the cysteine 86. Catalysis depends on residues histidine 173 and glutamate 175. Residues 200–392 enclose the GMPS ATP-PPase domain; the sequence is WTSASIIEDA…LGLPYNMLYR (193 aa). 227–233 contacts ATP; that stretch reads SGGVDSS.

In terms of assembly, homodimer.

The catalysed reaction is XMP + L-glutamine + ATP + H2O = GMP + L-glutamate + AMP + diphosphate + 2 H(+). The protein operates within purine metabolism; GMP biosynthesis; GMP from XMP (L-Gln route): step 1/1. Catalyzes the synthesis of GMP from XMP. This chain is GMP synthase [glutamine-hydrolyzing], found in Aliivibrio fischeri (strain MJ11) (Vibrio fischeri).